Consider the following 216-residue polypeptide: Large ribosomal subunit protein uL24m (216 aa).

A mitochondrion-targeting transit peptide spans 1 to 9; sequence MRLSALLAL. Phosphoserine is present on serine 24. One can recognise a KOW domain in the interval 56–89; it reads LFCGDMVEILEGKDAGKQGKVVQVVRQRNWVVLE.

It belongs to the universal ribosomal protein uL24 family. In terms of assembly, component of the mitochondrial ribosome large subunit (39S) which comprises a 16S rRNA and about 50 distinct proteins.

Its subcellular location is the mitochondrion. The polypeptide is Large ribosomal subunit protein uL24m (Mrpl24) (Mus musculus (Mouse)).